The following is a 345-amino-acid chain: D-apiose dehydrogenase (345 aa).

15–16 (FF) contacts NAD(+). Positions 24, 25, 27, and 30 each coordinate Mg(2+). Residues D37, S79, 97–98 (QK), N126, and 165–167 (QPY) contribute to the NAD(+) site. K98 contributes to the substrate binding site. The substrate site is built by Q165, D178, H182, and Y232.

The protein belongs to the Gfo/Idh/MocA family.

It catalyses the reaction D-apiofuranose + NAD(+) = D-apionolactone + NADH + H(+). It functions in the pathway carbohydrate metabolism. Involved in catabolism of D-apiose. Catalyzes oxidation of D-apiose to D-apionolactone. This chain is D-apiose dehydrogenase, found in Rhizobium rhizogenes (strain K84 / ATCC BAA-868) (Agrobacterium radiobacter).